Here is a 439-residue protein sequence, read N- to C-terminus: Probable cinnamyl alcohol dehydrogenase 8C (439 aa).

Cysteine 120 is a Zn(2+) binding site. Threonine 122 serves as a coordination point for NADP(+). Positions 142, 143, 173, 176, 179, 187, and 239 each coordinate Zn(2+). Residues threonine 243, 264-269 (GLGGLG), 287-292 (STSPGK), threonine 327, glycine 351, and 374-376 (NCV) each bind NADP(+).

This sequence belongs to the zinc-containing alcohol dehydrogenase family. Homodimer. Zn(2+) serves as cofactor.

The catalysed reaction is (E)-cinnamyl alcohol + NADP(+) = (E)-cinnamaldehyde + NADPH + H(+). The enzyme catalyses (E)-coniferol + NADP(+) = (E)-coniferaldehyde + NADPH + H(+). It catalyses the reaction (E)-sinapyl alcohol + NADP(+) = (E)-sinapaldehyde + NADPH + H(+). It carries out the reaction (E)-4-coumaroyl alcohol + NADP(+) = (E)-4-coumaraldehyde + NADPH + H(+). The catalysed reaction is (E)-caffeyl alcohol + NADP(+) = (E)-caffeyl aldehyde + NADPH + H(+). Its pathway is aromatic compound metabolism; phenylpropanoid biosynthesis. Its function is as follows. Involved in lignin biosynthesis. Catalyzes the final step specific for the production of lignin monomers. Catalyzes the NADPH-dependent reduction of coniferaldehyde, 5-hydroxyconiferaldehyde, sinapaldehyde, 4-coumaraldehyde and caffeyl aldehyde to their respective alcohols. In Oryza sativa subsp. japonica (Rice), this protein is Probable cinnamyl alcohol dehydrogenase 8C.